The primary structure comprises 422 residues: Glutamate-1-semialdehyde 2,1-aminomutase (422 aa).

The residue at position 264 (Lys-264) is an N6-(pyridoxal phosphate)lysine.

This sequence belongs to the class-III pyridoxal-phosphate-dependent aminotransferase family. HemL subfamily. As to quaternary structure, homodimer. Requires pyridoxal 5'-phosphate as cofactor.

Its subcellular location is the cytoplasm. The enzyme catalyses (S)-4-amino-5-oxopentanoate = 5-aminolevulinate. The protein operates within porphyrin-containing compound metabolism; protoporphyrin-IX biosynthesis; 5-aminolevulinate from L-glutamyl-tRNA(Glu): step 2/2. In Clostridium kluyveri (strain ATCC 8527 / DSM 555 / NBRC 12016 / NCIMB 10680 / K1), this protein is Glutamate-1-semialdehyde 2,1-aminomutase.